The following is a 25-amino-acid chain: CDAPTHYCTNYWECCSGYCEHSHCW.

3 cysteine pairs are disulfide-bonded: C1/C15, C8/C19, and C14/C24. The residue at position 4 (P4) is a 4-hydroxyproline. 4-carboxyglutamate occurs at positions 13 and 20.

The protein belongs to the conotoxin O2 superfamily. In terms of tissue distribution, expressed by the venom duct.

The protein resides in the secreted. In terms of biological role, micromolar concentrations of PiVIIA increase the magnitude of the macroscopic calcium current in DRG neurons from rat. An increase, even modest of the calcium current, may have a significant impact in the excitability and electrical activity of neurons, and may set up PiVIIA as a member of the pharmacological family of the gamma-conotoxins. The sequence is that of Gamma-conotoxin PiVIIA from Conus princeps (Prince cone).